Here is a 286-residue protein sequence, read N- to C-terminus: UDP-3-O-acyl-N-acetylglucosamine deacetylase (286 aa).

Positions 81, 240, and 244 each coordinate Zn(2+). The active-site Proton donor is the His266.

This sequence belongs to the LpxC family. Zn(2+) is required as a cofactor.

It catalyses the reaction a UDP-3-O-[(3R)-3-hydroxyacyl]-N-acetyl-alpha-D-glucosamine + H2O = a UDP-3-O-[(3R)-3-hydroxyacyl]-alpha-D-glucosamine + acetate. The protein operates within glycolipid biosynthesis; lipid IV(A) biosynthesis; lipid IV(A) from (3R)-3-hydroxytetradecanoyl-[acyl-carrier-protein] and UDP-N-acetyl-alpha-D-glucosamine: step 2/6. Its function is as follows. Catalyzes the hydrolysis of UDP-3-O-myristoyl-N-acetylglucosamine to form UDP-3-O-myristoylglucosamine and acetate, the committed step in lipid A biosynthesis. The chain is UDP-3-O-acyl-N-acetylglucosamine deacetylase from Francisella tularensis subsp. tularensis (strain FSC 198).